The primary structure comprises 210 residues: Molybdenum cofactor guanylyltransferase (210 aa).

GTP contacts are provided by residues 14-16, lysine 27, asparagine 55, aspartate 73, and aspartate 108; that span reads LAG. Mg(2+) is bound at residue aspartate 108.

The protein belongs to the MobA family. Monomer. Mg(2+) serves as cofactor.

It is found in the cytoplasm. The catalysed reaction is Mo-molybdopterin + GTP + H(+) = Mo-molybdopterin guanine dinucleotide + diphosphate. Transfers a GMP moiety from GTP to Mo-molybdopterin (Mo-MPT) cofactor (Moco or molybdenum cofactor) to form Mo-molybdopterin guanine dinucleotide (Mo-MGD) cofactor. This is Molybdenum cofactor guanylyltransferase from Rhodopseudomonas palustris (strain BisB5).